Here is a 278-residue protein sequence, read N- to C-terminus: Large ribosomal subunit protein uL2c (278 aa).

Residues 224 to 267 form a disordered region; it reads VVMNPVDHPHGGGEGRAPIGRKKPLTPWGHTALGGRSRKNHKYS.

The protein belongs to the universal ribosomal protein uL2 family. In terms of assembly, part of the 50S ribosomal subunit.

It localises to the plastid. The protein resides in the chloroplast. This chain is Large ribosomal subunit protein uL2c (rpl2), found in Huperzia lucidula (Shining clubmoss).